The chain runs to 553 residues: Transcription factor GAMYB (553 aa).

A compositionally biased stretch (basic and acidic residues) spans 1-17; the sequence is MYRVKSESDCDMIHQEQ. The segment at 1-45 is disordered; that stretch reads MYRVKSESDCDMIHQEQMDSPVADDGSSGGSPHRGGGPPLKKGPW. Gly residues predominate over residues 27-38; it reads SSGGSPHRGGGP. HTH myb-type domains follow at residues 37-89 and 90-144; these read GPPL…ANHL and RPNL…KRCQ. 2 consecutive DNA-binding regions (H-T-H motif) follow at residues 65–89 and 117–140; these read WNAV…ANHL and WARM…NTRI. A disordered region spans residues 464-489; sequence PAQSTSMGSGEQVMGPKYEPGDTSPH.

In terms of assembly, interacts with MYBS1. In terms of tissue distribution, expressed in aleurone cells, inflorescence shoot apical region, stamen primordia, and tapetum cells of the anther. Expressed at low level in roots and vegetative shoots.

It is found in the nucleus. Functionally, transcriptional activator of gibberellin-dependent alpha-amylase expression in aleurone cells. Involved in pollen and floral organs development. May bind to the 5'-TAACAAA-3' box of alpha-amylase promoter. Required for anther development. Functions in parallel with UDT1 to regulate early anther development. Functions upstream of the transcription factor TDR and may positively regulate its transcription. Required for pollen development. Probably required for controlling tapetal cell size and promoting tapetal programmed cell death (PCD) during anther development. Required for exine and Ubisch body formation in anthers. Interacts with the DNA specific motifs of giberrellin-up-regulated genes of anthers and regulates their expression. Positively regulates the expression of the laurate hydroxylase CYP703A3, known to be essential for the development of pollen exine and anther epicuticular layer. Functions with MYBS1 to integrate diverse nutrient starvation and gibberellin (GA) signaling pathways during germination of grains. Sugar, nitrogen and phosphate starvation signals converge and interconnect with GA to promote the co-nuclear import of GAMYB and MYBS1, resulting in the expression of a large set of GA-inducible hydrolases, transporters and regulators that are essential for mobilization of nutrient reserves in the endosperm to support seedling growth. This Oryza sativa subsp. japonica (Rice) protein is Transcription factor GAMYB.